Consider the following 178-residue polypeptide: FXYD domain-containing ion transport regulator 5 (178 aa).

An N-terminal signal peptide occupies residues 1 to 21 (MSPSGRLCLLTIVGLILPTRG). At 22–145 (QTLKDTTSSS…FYDEHTLRKR (124 aa)) the chain is on the extracellular side. Residues 23–131 (TLKDTTSSSS…QTLKPSGFHE (109 aa)) are disordered. Composition is skewed to low complexity over residues 26 to 36 (DTTSSSSADST) and 68 to 77 (TPQPQTQTQQ). Positions 103-125 (DTTTLSERPSPSTDVQTDPQTLK) are enriched in polar residues. Residues 146–164 (GLLVAAVLFITGIIILTSG) form a helical membrane-spanning segment. Topologically, residues 165–178 (KCRQLSRLCRNRCR) are cytoplasmic.

This sequence belongs to the FXYD family. As to quaternary structure, regulatory subunit of the sodium/potassium-transporting ATPase which is composed of a catalytic alpha subunit, a non-catalytic beta subunit and an additional regulatory subunit. The regulatory subunit, a member of the FXYD protein family, modulates the enzymatic activity in a tissue- and isoform-specific way by changing affinities of the Na+/K+-ATPase toward Na(+), K(+) or ATP. Glycosylated.

The protein resides in the cell membrane. It is found in the basolateral cell membrane. In terms of biological role, associates with and regulates the activity of the sodium/potassium-transporting ATPase (NKA) which catalyzes the hydrolysis of ATP coupled with the exchange of Na(+) and K(+) ions across the plasma membrane. May increase NKA activity by increasing the apparent affinity for Na(+). Involved in down-regulation of E-cadherin which results in reduced cell adhesion. Promotes metastasis. The protein is FXYD domain-containing ion transport regulator 5 (FXYD5) of Homo sapiens (Human).